The chain runs to 1013 residues: Nucleotide-binding oligomerization domain-containing protein 2 (1013 aa).

CARD domains follow at residues 1 to 95 and 99 to 191; these read MCAQ…LPSS and HSPH…EDAA. The ATG16L1-binding motif motif lies at 36–50; sequence REVLSWEDYEGLSLV. The disordered stretch occupies residues 82–106; that stretch reads EAQADSQPPELPSSWDPHSPHPARD. Threonine 212, tyrosine 225, threonine 226, glycine 275, serine 276, glycine 277, lysine 278, serine 279, and threonine 280 together coordinate ADP. The segment at 214–247 is required for CARD9 binding; sequence DGAENLCLEEVYTENVLEIQMEVGMAGPSQQSPT. In terms of domain architecture, NACHT spans 266–591; it reads DTVLVVGEAG…FFAAFYLALS (326 aa). Residue 272 to 279 coordinates ATP; it reads GEAGSGKS. Cysteine 368 carries S-palmitoyl cysteine lipidation. An ADP-binding site is contributed by histidine 576. LRR repeat units follow at residues 764 to 785, 789 to 809, 817 to 838, 845 to 866, 873 to 893, 901 to 922, 929 to 949, 957 to 978, and 985 to 1008; these read RPVA…QLLP, VCKA…CKLV, QLQK…SMAR, NFLA…VLAQ, SLQF…QALA, SLRW…ALAL, ALEE…CFLA, SLKV…ALLR, and TILE…SHQD.

The protein belongs to the NOD1-NOD2 family. As to quaternary structure, homooligomer: homooligomerizes following muramyl dipeptide (MDP)-binding, promoting RIPK2 recruitment. Interacts (via CARD domain) with RIPK2 (via CARD domain). Following RIPK2 recruitment, RIPK2 homooligomerizes via its CARD domain and forms long filaments named RIPosomes. Interacts (via CARD domain) with ubiquitin; inhibiting interaction with RIPK2. Component of a signaling complex consisting of ARHGEF2, NOD2 and RIPK2. Interacts with ANKRD17 (via N-terminus). Interacts with HSPA1A; the interaction enhances NOD2 stability. Interacts (via both CARD domains) with HSP90; the interaction enhances NOD2 stability. Interacts (via CARD domain) with SOCS3; the interaction promotes NOD2 degradation. Interacts (via CARD domain) with ERBIN; the interaction inhibits activation of NOD2. Interacts with MAPKBP1; the interaction is enhanced in the presence of muramyl dipeptide (MDP) and inhibits NOD2 homooligomerization and activation. Interacts with INAVA; the interaction takes place upon Pattern recognition receptor (PRR) stimulation. Interacts (via NACHT domain) with CARD9. Interacts (via CARD domain) with CASP1; this interaction leads to IL1B processing. Also interacts with CASP4. Interacts with NLRP1; this interaction is enhanced in the presence of muramyl dipeptide (MDP) and leads to increased IL1B release. Interacts with NLRP12; this interaction promotes degradation of NOD2 through the ubiquitin-proteasome pathway. Interacts with ANKHD1, C10orf67, CHMP5, DOCK7, ENTR1, KRT15, LDOC1, PPP1R12C, PPP2R3B, TRIM41 and VIM. Interacts with MAVS; interaction takes place following single-stranded RNA (ssRNA)-binding. Interacts with ATG16L1. Interacts with IRGM; promoting IRGM 'Lys-63'-linked polyubiquitination, which is required for interactions with the core autophagy factors. Palmitoylated by ZDHHC5; palmitoylation is required for proper recruitment to the bacterial entry site and hence for proper signaling upon cognate peptidoglycan detection. Palmitoylation promotes localization to the cell membrane. Palmitoylation protects from SQSTM1/p62-dependent autophagic degradation. In terms of processing, polyubiquitinated by TRIM27, leading to proteasome-mediated degradation. Polyubiquitinated and degraded following muramyl dipeptide (MDP) stimulation, conferring MDP tolerance and preventing septic shock. Post-translationally, degraded via selective autophagy following interaction with IRGM. IRGM promotes NOD2-RIPK2 RIPosome recruitment to autophagosome membranes, promoting their SQSTM1/p62-dependent autophagic degradation. O-glycosylated by OGT, O-GlcNAcylation increases protein stability.

It localises to the cell membrane. The protein localises to the basolateral cell membrane. Its subcellular location is the cytoplasm. The protein resides in the mitochondrion. Its activity is regulated as follows. ADP-binding promotes an inactive closed conformation. In terms of biological role, pattern recognition receptor (PRR) that detects bacterial peptidoglycan fragments and other danger signals and plays an important role in gastrointestinal immunity. Specifically activated by muramyl dipeptide (MDP), a fragment of bacterial peptidoglycan found in every bacterial peptidoglycan type. NOD2 specifically recognizes and binds 6-O-phospho-MDP, the phosphorylated form of MDP, which is generated by NAGK. 6-O-phospho-MDP-binding triggers oligomerization that facilitates the binding and subsequent activation of the proximal adapter receptor-interacting RIPK2. Following recruitment, RIPK2 undergoes 'Met-1'- (linear) and 'Lys-63'-linked polyubiquitination by E3 ubiquitin-protein ligases XIAP, BIRC2, BIRC3 and the LUBAC complex, becoming a scaffolding protein for downstream effectors, triggering activation of the NF-kappa-B and MAP kinases signaling. This in turn leads to the transcriptional activation of hundreds of genes involved in immune response. Its ability to detect bacterial MDP plays a central role in maintaining the equilibrium between intestinal microbiota and host immune responses to control inflammation. An imbalance in this relationship results in dysbiosis, whereby pathogenic bacteria prevail on commensals, causing damage in the intestinal epithelial barrier as well as allowing bacterial invasion and inflammation. Acts as a regulator of appetite by sensing MDP in a subset of brain neurons: microbiota-derived MDP reach the brain, where they bind and activate NOD2 in inhibitory hypothalamic neurons, decreasing neuronal activity, thereby regulating satiety and body temperature. NOD2-dependent MDP-sensing of bacterial cell walls in the intestinal epithelial compartment contributes to sustained postnatal growth upon undernutrition. Also plays a role in antiviral response by acting as a sensor of single-stranded RNA (ssRNA) from viruses: upon ssRNA-binding, interacts with MAVS, leading to activation of interferon regulatory factor-3/IRF3 and expression of type I interferon. Also acts as a regulator of autophagy in dendritic cells via its interaction with ATG16L1, possibly by recruiting ATG16L1 at the site of bacterial entry. NOD2 activation in the small intestine crypt also contributes to intestinal stem cells survival and function: acts by promoting mitophagy via its association with ATG16L1. In addition to its main role in innate immunity, also regulates the adaptive immune system by acting as regulator of helper T-cell and regulatory T-cells (Tregs). Besides recognizing pathogens, also involved in the endoplasmic reticulum stress response: acts by sensing and binding to the cytosolic metabolite sphingosine-1-phosphate generated in response to endoplasmic reticulum stress, initiating an inflammation process that leads to activation of the NF-kappa-B and MAP kinases signaling. May also be involved in NLRP1 activation following activation by MDP, leading to CASP1 activation and IL1B release in macrophages. This is Nucleotide-binding oligomerization domain-containing protein 2 (NOD2) from Bos taurus (Bovine).